The primary structure comprises 330 residues: Cyclin N-terminal domain-containing protein 1 (330 aa).

The Cyclin N-terminal domain maps to 27–178; it reads DALLHLAQQN…VLKSLNFRIN (152 aa).

In terms of assembly, interacts with PRR19; this interaction promotes crossover formation. Interacts with RFC3 and RFC4; these interactions facilitate crossover formation. Interacts with CDC34; this interaction regulates the cell-cycle progression.

The protein localises to the nucleus. It is found in the cytoplasm. The protein resides in the chromosome. Functionally, plays a role in the different steps of crossover formation during meiotic recombination. Participates in the crossover differentiation step of crossover-specific recombination intermediates through its interaction with PRR19. In addition, stimulates crossover formation through the interactions with RFC3 and RFC4 and simultaneously regulates cell-cycle progression through interactions with CDC34 and subsequent ubiquitination of WEE1. May also participates in an active deselection process that destabilizes or removes excess pre-CO intermediates. The polypeptide is Cyclin N-terminal domain-containing protein 1 (Homo sapiens (Human)).